A 129-amino-acid polypeptide reads, in one-letter code: MSGGRRKEEPPQPQLANGALKVSVWSKVLRSDAAWEDKDEFLDVIYWFRQIIAVVLGVIWGVLPLRGFLGIAGFCVINAGVLYLYFSNYLQIDEEEYGGTWELTKEGFMTSFALFMVIWIIFYTAIHYD.

Residues 1 to 44 (MSGGRRKEEPPQPQLANGALKVSVWSKVLRSDAAWEDKDEFLDV) lie on the Cytoplasmic side of the membrane. A helical membrane pass occupies residues 45–65 (IYWFRQIIAVVLGVIWGVLPL). Arg66 is a topological domain (lumenal). Residues 67–84 (GFLGIAGFCVINAGVLYL) traverse the membrane as a helical segment. At 85-103 (YFSNYLQIDEEEYGGTWEL) the chain is on the cytoplasmic side. A helical transmembrane segment spans residues 104 to 127 (TKEGFMTSFALFMVIWIIFYTAIH). The Lumenal portion of the chain corresponds to 128 to 129 (YD).

It belongs to the EMC6 family. As to quaternary structure, component of the GET- and EMC-like (GEL) complex, composed of RAB5IF/OPTI and TMCO1. The GEL complex is part of the multi-pass translocon (MPT) complex, composed of three subcomplexes, the GEL complex (composed of RAB5IF/OPTI and TMCO1), the BOS complex (composed of NCLN/Nicalin, NOMO1 and TMEM147) and the PAT complex (composed of WDR83OS/Asterix and CCDC47). The MPT complex associates with the SEC61 complex. Interacts with NDUFS3, NDUFA4, NDUFV1, NDUFA9 and NDUFS8 of the mitochondrial membrane respiratory chain NADH dehydrogenase (Complex I). Interacts with UQCRC2 of the ubiquinol-cytochrome c reductase complex (Complex III). Interacts with COX5A and COX7C of the cytochrome c oxidase complex (Complex IV).

The protein localises to the endoplasmic reticulum membrane. It is found in the mitochondrion inner membrane. Functionally, component of the multi-pass translocon (MPT) complex that mediates insertion of multi-pass membrane proteins into the lipid bilayer of membranes. The MPT complex takes over after the SEC61 complex: following membrane insertion of the first few transmembrane segments of proteins by the SEC61 complex, the MPT complex occludes the lateral gate of the SEC61 complex to promote insertion of subsequent transmembrane regions. Within the MPT complex, the GEL subcomplex may mediate insertion of transmembrane regions into the membrane. In addition to its role in multi-pass membrane insertion, RAB5IF/OPTI also acts as an assembly factor for mitochondrial respiratory complexes. The protein is GEL complex subunit OPTI (RAB5IF) of Canis lupus familiaris (Dog).